Reading from the N-terminus, the 394-residue chain is Elongation factor Tu (394 aa).

The 195-residue stretch at 10–204 (KPHINIGTIG…AVDDNIPTPE (195 aa)) folds into the tr-type G domain. The segment at 19 to 26 (GHVDHGKT) is G1. 19 to 26 (GHVDHGKT) contacts GTP. Thr26 provides a ligand contact to Mg(2+). Residues 60–64 (GITIN) form a G2 region. Residues 81–84 (DCPG) form a G3 region. GTP-binding positions include 81–85 (DCPGH) and 136–139 (NKVD). The G4 stretch occupies residues 136–139 (NKVD). The interval 174 to 176 (SAL) is G5.

Belongs to the TRAFAC class translation factor GTPase superfamily. Classic translation factor GTPase family. EF-Tu/EF-1A subfamily. As to quaternary structure, monomer.

It is found in the cytoplasm. The catalysed reaction is GTP + H2O = GDP + phosphate + H(+). GTP hydrolase that promotes the GTP-dependent binding of aminoacyl-tRNA to the A-site of ribosomes during protein biosynthesis. The chain is Elongation factor Tu from Chlamydia pneumoniae (Chlamydophila pneumoniae).